The following is a 605-amino-acid chain: Elongation factor 4 (605 aa).

The tr-type G domain occupies 9–192 (SRIRNFCIIA…AIIARVPSPA (184 aa)). GTP contacts are provided by residues 21–26 (DHGKST) and 139–142 (NKID).

It belongs to the TRAFAC class translation factor GTPase superfamily. Classic translation factor GTPase family. LepA subfamily.

The protein localises to the cell inner membrane. It carries out the reaction GTP + H2O = GDP + phosphate + H(+). Its function is as follows. Required for accurate and efficient protein synthesis under certain stress conditions. May act as a fidelity factor of the translation reaction, by catalyzing a one-codon backward translocation of tRNAs on improperly translocated ribosomes. Back-translocation proceeds from a post-translocation (POST) complex to a pre-translocation (PRE) complex, thus giving elongation factor G a second chance to translocate the tRNAs correctly. Binds to ribosomes in a GTP-dependent manner. This is Elongation factor 4 from Chlorobium phaeovibrioides (strain DSM 265 / 1930) (Prosthecochloris vibrioformis (strain DSM 265)).